A 350-amino-acid chain; its full sequence is Phosphoribosylformylglycinamidine cyclo-ligase (350 aa).

This sequence belongs to the AIR synthase family.

It localises to the cytoplasm. The enzyme catalyses 2-formamido-N(1)-(5-O-phospho-beta-D-ribosyl)acetamidine + ATP = 5-amino-1-(5-phospho-beta-D-ribosyl)imidazole + ADP + phosphate + H(+). Its pathway is purine metabolism; IMP biosynthesis via de novo pathway; 5-amino-1-(5-phospho-D-ribosyl)imidazole from N(2)-formyl-N(1)-(5-phospho-D-ribosyl)glycinamide: step 2/2. The chain is Phosphoribosylformylglycinamidine cyclo-ligase from Cupriavidus taiwanensis (strain DSM 17343 / BCRC 17206 / CCUG 44338 / CIP 107171 / LMG 19424 / R1) (Ralstonia taiwanensis (strain LMG 19424)).